Consider the following 272-residue polypeptide: Small ribosomal subunit protein uS2 (272 aa).

The disordered stretch occupies residues 244 to 272; it reads EDDYEGAEGDLDLDSANEEESLEDNNEEE.

Belongs to the universal ribosomal protein uS2 family.

The sequence is that of Small ribosomal subunit protein uS2 from Trichodesmium erythraeum (strain IMS101).